A 695-amino-acid polypeptide reads, in one-letter code: Elongation factor G (695 aa).

The tr-type G domain occupies 12-286; sequence DKLRNIGIMA…AVIDYLPSPL (275 aa). GTP-binding positions include 21-28, 85-89, and 139-142; these read AHIDAGKT, DTPGH, and NKMD.

It belongs to the TRAFAC class translation factor GTPase superfamily. Classic translation factor GTPase family. EF-G/EF-2 subfamily.

It localises to the cytoplasm. In terms of biological role, catalyzes the GTP-dependent ribosomal translocation step during translation elongation. During this step, the ribosome changes from the pre-translocational (PRE) to the post-translocational (POST) state as the newly formed A-site-bound peptidyl-tRNA and P-site-bound deacylated tRNA move to the P and E sites, respectively. Catalyzes the coordinated movement of the two tRNA molecules, the mRNA and conformational changes in the ribosome. The sequence is that of Elongation factor G from Thermotoga sp. (strain RQ2).